The following is a 440-amino-acid chain: Transposon Ty1-JR2 Gag polyprotein (440 aa).

Over residues 1-16 (MESQQLSQHSHISHGS) the composition is skewed to low complexity. Disordered stretches follow at residues 1–93 (MESQ…MMTQ), 126–173 (PQSQ…RPPP), and 352–440 (GSRN…PETY). 3 stretches are compositionally biased toward polar residues: residues 48–60 (TKANSQQTTTPAS), 71–93 (SPQTAQSHSPQNGPYPQQCMMTQ), and 127–152 (QSQFPQYPSSVGTPLSTPSPESGNTF). Over residues 153–165 (TDSSSADSDMTST) the composition is skewed to low complexity. Positions 299–401 (NNGIHINNKV…NSKSKTARAH (103 aa)) are RNA-binding. Residues 402-418 (NVSTSNNSPSTDNDSIS) show a composition bias toward low complexity. Serine 416 bears the Phosphoserine mark. The span at 419–428 (KSTTEPIQLN) shows a compositional bias: polar residues. Basic and acidic residues predominate over residues 429 to 440 (NKHDLHLRPETY).

In terms of assembly, homotrimer.

It localises to the cytoplasm. Its function is as follows. Capsid protein (CA) is the structural component of the virus-like particle (VLP), forming the shell that encapsulates the retrotransposons dimeric RNA genome. The particles are assembled from trimer-clustered units and there are holes in the capsid shells that allow for the diffusion of macromolecules. CA also has nucleocapsid-like chaperone activity, promoting primer tRNA(i)-Met annealing to the multipartite primer-binding site (PBS), dimerization of Ty1 RNA and initiation of reverse transcription. The sequence is that of Transposon Ty1-JR2 Gag polyprotein (TY1A-JR2) from Saccharomyces cerevisiae (strain ATCC 204508 / S288c) (Baker's yeast).